Reading from the N-terminus, the 213-residue chain is MGKLLTMAMPKGRIFEEAAGLLRQAGYRLPEEFEDSRKLIIDVPEENLRFILAKPMDVTTYVEHGVADVGIAGKDVMLEEERDVYEVLDLNISKCHLAVAGLPNTDWSGVAPRIATKYPNVASSYFREQGEQVEIIKLNGSIELAPLIGLADRIVDIVSTGQTLKENGLVETEHICDITSRFIVNPVSYRMKDDVIDEMASRLSLVVEGETAK.

It belongs to the ATP phosphoribosyltransferase family. Short subfamily. Heteromultimer composed of HisG and HisZ subunits.

It is found in the cytoplasm. The catalysed reaction is 1-(5-phospho-beta-D-ribosyl)-ATP + diphosphate = 5-phospho-alpha-D-ribose 1-diphosphate + ATP. The protein operates within amino-acid biosynthesis; L-histidine biosynthesis; L-histidine from 5-phospho-alpha-D-ribose 1-diphosphate: step 1/9. Catalyzes the condensation of ATP and 5-phosphoribose 1-diphosphate to form N'-(5'-phosphoribosyl)-ATP (PR-ATP). Has a crucial role in the pathway because the rate of histidine biosynthesis seems to be controlled primarily by regulation of HisG enzymatic activity. This chain is ATP phosphoribosyltransferase (hisG), found in Bacillus subtilis (strain 168).